A 173-amino-acid chain; its full sequence is Small ribosomal subunit protein uS5 (173 aa).

Residues 17 to 80 (LREKMIAVNR…EESRRNMIKV (64 aa)) form the S5 DRBM domain.

It belongs to the universal ribosomal protein uS5 family. In terms of assembly, part of the 30S ribosomal subunit. Contacts proteins S4 and S8.

With S4 and S12 plays an important role in translational accuracy. Functionally, located at the back of the 30S subunit body where it stabilizes the conformation of the head with respect to the body. This Delftia acidovorans (strain DSM 14801 / SPH-1) protein is Small ribosomal subunit protein uS5.